The chain runs to 260 residues: Thrombin-like enzyme gloshedobin (260 aa).

The first 18 residues, 1–18 (MVLIRVQANLLILQLSYA), serve as a signal peptide directing secretion. The propeptide occupies 19–24 (QKSSEL). The Peptidase S1 domain occupies 25-252 (IIGGDECNIN…TEWIQSIIAG (228 aa)). 6 disulfides stabilise this stretch: Cys-31–Cys-165, Cys-52–Cys-68, Cys-100–Cys-258, Cys-144–Cys-212, Cys-176–Cys-191, and Cys-202–Cys-227. Residues His-67 and Asp-112 each act as charge relay system in the active site. N-linked (GlcNAc...) asparagine glycosylation is found at Asn-123 and Asn-124. Ser-206 serves as the catalytic Charge relay system.

The protein belongs to the peptidase S1 family. Snake venom subfamily. In terms of assembly, monomer. Expressed by the venom gland.

It localises to the secreted. Its activity is regulated as follows. Completely inhibited by PMSF, and N-tosyl-Lphenylalanine chloromethyl ketone (TPCK) and poorly inhibited by benzamidine and derivates. Not inhibited by EDTA, heparin and hirudin. In terms of biological role, thrombin-like snake venom serine protease. The recombinant form clots fibrinogen by cleaving fibrinogen Aalpha chain (FGA), and slowly Bbeta chain (FGB). Has amidolytic activities. This chain is Thrombin-like enzyme gloshedobin, found in Gloydius shedaoensis (Shedao island pit viper).